The chain runs to 439 residues: Gap junction gamma-2 protein (439 aa).

Topologically, residues 1–25 (MTNMSWSFLTRLLEEIHNHSTFVGK) are cytoplasmic. The chain crosses the membrane as a helical span at residues 26 to 46 (VWLTVLVVFRIVLTAVGGEAI). The Extracellular portion of the chain corresponds to 47–78 (YSDEQAKFTCNTRQPGCDNVCYDAFAPLSHVR). A helical transmembrane segment spans residues 79 to 99 (FWVFQIVVISTPSVMYLGYAV). The Cytoplasmic segment spans residues 100-216 (HRLARASEQE…EGLMRVYVAQ (117 aa)). The tract at residues 108–178 (QERRRALRRR…AEEAGAEEAC (71 aa)) is disordered. The segment covering 112 to 125 (RALRRRPGPRRAPR) has biased composition (basic residues). Acidic residues predominate over residues 140 to 174 (DLGEEEPMLGLGEEEEEEETGAAEGAGEEAEEAGA). The helical transmembrane segment at 217 to 237 (LVARAAFEVAFLVGQYLLYGF) threads the bilayer. Residues 238 to 265 (EVRPFFPCSRQPCPHVVDCFVSRPTEKT) are Extracellular-facing. A helical membrane pass occupies residues 266-286 (VFLLVMYVVSCLCLLLNLCEM). Topologically, residues 287-439 (AHLGLGSAQD…SRDGKTTVWI (153 aa)) are cytoplasmic. Residues 364 to 439 (AGDRDRDSSP…SRDGKTTVWI (76 aa)) form a disordered region. Serine 371 carries the post-translational modification Phosphoserine. Residues 378-393 (PAASRGPPRAGAPASR) are compositionally biased toward low complexity.

Belongs to the connexin family. Gamma-type subfamily. As to quaternary structure, a connexon is composed of a hexamer of connexins. Interacts with TJP1. Expressed in central nervous system, in sciatic nerve and sural nerve. Also detected in skeletal muscles.

Its subcellular location is the cell membrane. It is found in the cell junction. It localises to the gap junction. Its function is as follows. One gap junction consists of a cluster of closely packed pairs of transmembrane channels, the connexons, through which materials of low MW diffuse from one cell to a neighboring cell. May play a role in myelination in central and peripheral nervous systems. The sequence is that of Gap junction gamma-2 protein (GJC2) from Homo sapiens (Human).